The primary structure comprises 231 residues: mRNA-decapping enzyme subunit 1 (231 aa).

The segment at 92–120 is disordered; sequence QNGSNNIQVNNGSDNSNRNSSGNGNSYKS. Positions 101–120 are enriched in low complexity; that stretch reads NNGSDNSNRNSSGNGNSYKS.

This sequence belongs to the DCP1 family. In terms of assembly, component of the decapping complex composed of DCP1 and DCP2. Interacts with mRNAs, DHH1, LSM1, LSM2, LSM3, LSM4, LSM5, LSM6, LSM7, and the cap-binding proteins PAB1 and TIF4632/eIF-4G. In terms of processing, phosphorylated.

It is found in the cytoplasm. Its subcellular location is the P-body. Functionally, component of the decapping complex necessary for the degradation of mRNAs, both in normal mRNA turnover and in nonsense-mediated mRNA decay. Removes the 7-methyl guanine cap structure from mRNA molecules, yielding a 5'-phosphorylated mRNA fragment and 7m-GDP. Decapping is the major pathway of mRNA degradation in yeast. It occurs through deadenylation, decapping and subsequent 5' to 3' exonucleolytic decay of the transcript body. DCP1 is activated by the DEAD-box helicase DHH1 and destabilizes the eIF-4F cap-binding complex from the mRNA. This is mRNA-decapping enzyme subunit 1 (DCP1) from Saccharomyces cerevisiae (strain ATCC 204508 / S288c) (Baker's yeast).